A 436-amino-acid polypeptide reads, in one-letter code: Ribulose bisphosphate carboxylase large chain (436 aa).

K4 is subject to N6,N6,N6-trimethyllysine. Substrate is bound by residues N113 and T163. K165 acts as the Proton acceptor in catalysis. K167 contacts substrate. 3 residues coordinate Mg(2+): K191, D193, and E194. N6-carboxylysine is present on K191. Residue H284 is the Proton acceptor of the active site. Positions 285, 317, and 369 each coordinate substrate.

This sequence belongs to the RuBisCO large chain family. Type I subfamily. Heterohexadecamer of 8 large chains and 8 small chains; disulfide-linked. The disulfide link is formed within the large subunit homodimers. It depends on Mg(2+) as a cofactor. In terms of processing, the disulfide bond which can form in the large chain dimeric partners within the hexadecamer appears to be associated with oxidative stress and protein turnover.

The protein localises to the plastid. It is found in the chloroplast. The enzyme catalyses 2 (2R)-3-phosphoglycerate + 2 H(+) = D-ribulose 1,5-bisphosphate + CO2 + H2O. It carries out the reaction D-ribulose 1,5-bisphosphate + O2 = 2-phosphoglycolate + (2R)-3-phosphoglycerate + 2 H(+). RuBisCO catalyzes two reactions: the carboxylation of D-ribulose 1,5-bisphosphate, the primary event in carbon dioxide fixation, as well as the oxidative fragmentation of the pentose substrate in the photorespiration process. Both reactions occur simultaneously and in competition at the same active site. This Sanguinaria canadensis (Bloodroot) protein is Ribulose bisphosphate carboxylase large chain.